The sequence spans 195 residues: MPKLGMQSIRRRQLIDATLEAINEVGMHDATIAQIARRAGVSTGIISHYFRDKNGLLEATMRDITSQLRDAVLNRLHALPQGSAERRLQAIVGGNFDETQVSSAAMKAWLAFWASSMHQPMLYRLQQVSSRRLLSNLVSEFRRELPRQQAQEAGYGLAALIDGLWLRAALSGKPLDKPLAHSLTRHFITQHLPTD.

One can recognise an HTH tetR-type domain in the interval 8-68 (SIRRRQLIDA…ATMRDITSQL (61 aa)). Positions 31–50 (TIAQIARRAGVSTGIISHYF) form a DNA-binding region, H-T-H motif.

It participates in amine and polyamine biosynthesis; betaine biosynthesis via choline pathway [regulation]. In terms of biological role, repressor involved in the biosynthesis of the osmoprotectant glycine betaine. It represses transcription of the choline transporter BetT and the genes of BetAB involved in the synthesis of glycine betaine. The protein is HTH-type transcriptional regulator BetI of Escherichia coli O127:H6 (strain E2348/69 / EPEC).